The following is a 65-amino-acid chain: Large ribosomal subunit protein bL32 (65 aa).

Residues 1-19 (MAIVPKRKTSKQRKHKRQS) are compositionally biased toward basic residues. The tract at residues 1–21 (MAIVPKRKTSKQRKHKRQSHS) is disordered.

Belongs to the bacterial ribosomal protein bL32 family.

In Mesomycoplasma hyopneumoniae (strain 7448) (Mycoplasma hyopneumoniae), this protein is Large ribosomal subunit protein bL32.